A 237-amino-acid polypeptide reads, in one-letter code: Oligoribonuclease, mitochondrial (237 aa).

Residues 1–25 (MLGGSLGSRLLRGVGGTRGQFRARG) constitute a mitochondrion transit peptide. Residues 43-207 (MVWVDLEMTG…DDISESIKEL (165 aa)) enclose the Exonuclease domain. Positions 47 and 49 each coordinate Mg(2+). Serine 92 is subject to Phosphoserine. Position 122 is a phosphotyrosine (tyrosine 122). Position 147 (aspartate 147) interacts with Mg(2+). Residue lysine 173 is modified to N6-acetyllysine. Histidine 194 is an active-site residue. Aspartate 199 serves as a coordination point for Mg(2+).

The protein belongs to the oligoribonuclease family. Homodimer. Homotetramer. The cofactor is Mn(2+). Mg(2+) is required as a cofactor.

It is found in the mitochondrion intermembrane space. The protein resides in the mitochondrion matrix. The protein localises to the mitochondrion. It localises to the cytoplasm. Its subcellular location is the nucleus. Its function is as follows. 3'-to-5'exoribonuclease that preferentially degrades DNA and RNA oligonucleotides composed of only two nucleotides. Binds and degrades longer oligonucleotides with a lower affinity. Plays dual roles in mitochondria, scavenging nanoRNAs (small RNA oligonucleotides of &lt;5 nucleotides) that are produced by the degradosome and clearing short RNAs that are generated by RNA processing. Essential for correct initiation of mitochondrial transcription, degrading mitochondrial RNA dinucleotides to prevent RNA-primed transcription at non-canonical sites in the mitochondrial genome. Essential for embryonic development. The protein is Oligoribonuclease, mitochondrial (REXO2) of Bos taurus (Bovine).